We begin with the raw amino-acid sequence, 633 residues long: GTPase-activating protein GYP3 (633 aa).

A disordered region spans residues 26–127; the sequence is AFTVKSPSVP…HSDDLDLVPD (102 aa). The span at 37–47 shows a compositional bias: basic and acidic residues; that stretch reads FHDKMHSDHSS. Acidic residues predominate over residues 99–115; it reads GEDDDDNNGDNGNEDLE. Position 147 is a phosphoserine (Ser147). The 234-residue stretch at 223–456 folds into the Rab-GAP TBC domain; that stretch reads GIPAEWRGNA…RIWDCLFYEE (234 aa). At Ser484 the chain carries Phosphoserine.

The protein resides in the cytoplasm. Its subcellular location is the bud. It is found in the bud neck. Regulates exocytosis by functioning as a GAP for SEC4. Stimulates specifically the GTPase activity of YPT6. Also required for efficient polarization of the actin patches. In Saccharomyces cerevisiae (strain ATCC 204508 / S288c) (Baker's yeast), this protein is GTPase-activating protein GYP3 (MSB3).